A 217-amino-acid chain; its full sequence is Probable transaldolase (217 aa).

The active-site Schiff-base intermediate with substrate is lysine 83.

This sequence belongs to the transaldolase family. Type 3B subfamily.

Its subcellular location is the cytoplasm. It carries out the reaction D-sedoheptulose 7-phosphate + D-glyceraldehyde 3-phosphate = D-erythrose 4-phosphate + beta-D-fructose 6-phosphate. Its pathway is carbohydrate degradation; pentose phosphate pathway; D-glyceraldehyde 3-phosphate and beta-D-fructose 6-phosphate from D-ribose 5-phosphate and D-xylulose 5-phosphate (non-oxidative stage): step 2/3. Functionally, transaldolase is important for the balance of metabolites in the pentose-phosphate pathway. The sequence is that of Probable transaldolase from Roseobacter denitrificans (strain ATCC 33942 / OCh 114) (Erythrobacter sp. (strain OCh 114)).